Here is a 288-residue protein sequence, read N- to C-terminus: uncharacterized protein (288 aa).

Over residues 1–12 (MTEGRCAQHPDG) the composition is skewed to basic and acidic residues. Residues 1 to 20 (MTEGRCAQHPDGLDVQDVCD) are disordered.

Belongs to the class IV-like SAM-binding methyltransferase superfamily. RNA methyltransferase TrmH family.

This is an uncharacterized protein from Mycobacterium tuberculosis (strain ATCC 25618 / H37Rv).